The chain runs to 136 residues: Aspartate 1-decarboxylase (136 aa).

The Schiff-base intermediate with substrate; via pyruvic acid role is filled by Ser-25. Ser-25 is modified (pyruvic acid (Ser)). Residue Thr-57 coordinates substrate. Catalysis depends on Tyr-58, which acts as the Proton donor. Substrate is bound at residue 73-75; sequence GAA.

It belongs to the PanD family. Heterooctamer of four alpha and four beta subunits. Requires pyruvate as cofactor. Is synthesized initially as an inactive proenzyme, which is activated by self-cleavage at a specific serine bond to produce a beta-subunit with a hydroxyl group at its C-terminus and an alpha-subunit with a pyruvoyl group at its N-terminus.

It localises to the cytoplasm. The catalysed reaction is L-aspartate + H(+) = beta-alanine + CO2. It participates in cofactor biosynthesis; (R)-pantothenate biosynthesis; beta-alanine from L-aspartate: step 1/1. Functionally, catalyzes the pyruvoyl-dependent decarboxylation of aspartate to produce beta-alanine. This Acidothermus cellulolyticus (strain ATCC 43068 / DSM 8971 / 11B) protein is Aspartate 1-decarboxylase.